The sequence spans 71 residues: Protein CYSTEINE-RICH TRANSMEMBRANE MODULE 6 (71 aa).

Positions 1 to 12 (MSQYSQNQSSGA) are enriched in polar residues. The segment at 1-36 (MSQYSQNQSSGAYPTPPVSTGPYVAPPPLGYPTNDT) is disordered. Pro residues predominate over residues 14 to 30 (PTPPVSTGPYVAPPPLG). A helical membrane pass occupies residues 48–64 (SKGDGFLKGCLAAMCCC).

This sequence belongs to the CYSTM1 family. As to quaternary structure, homodimer and heterodimers. Interacts with CYSTM7 and WIH1/CYSTM13. Mostly expressed in roots, stems, rosette leaves and siliques and, to a lower extent, in flowers and cauline leaves.

It is found in the cell membrane. Its subcellular location is the cytoplasm. Functionally, involved in resistance to abiotic stress. In Arabidopsis thaliana (Mouse-ear cress), this protein is Protein CYSTEINE-RICH TRANSMEMBRANE MODULE 6.